Consider the following 167-residue polypeptide: Single-stranded DNA-binding protein 2 (167 aa).

The SSB domain maps to 1–104 (MLNRVVLVGR…VVCDSVQFLE (104 aa)). The tract at residues 107–167 (NAQQNGGQRQ…IDISDDDLPF (61 aa)) is disordered. 2 stretches are compositionally biased toward low complexity: residues 109–118 (QQNGGQRQQN) and 132–147 (SGQN…TKQS). The Important for interaction with partner proteins signature appears at 162–167 (DDDLPF).

In terms of assembly, homotetramer.

Its function is as follows. Plays an important role in DNA replication, recombination and repair. Binds to ssDNA and to an array of partner proteins to recruit them to their sites of action during DNA metabolism. The sequence is that of Single-stranded DNA-binding protein 2 (ssb2) from Staphylococcus aureus (strain MSSA476).